The following is a 283-amino-acid chain: Hydrogenase expression/formation protein HoxQ (283 aa).

The tract at residues 1-29 is disordered; the sequence is MNDDLPILPPGFGPGSHGEEERPDCPSMP.

The protein belongs to the HupH/HyaF family.

This chain is Hydrogenase expression/formation protein HoxQ (hoxQ), found in Azotobacter vinelandii.